The chain runs to 118 residues: Thioredoxin H-type (118 aa).

The Thioredoxin domain occupies alanine 2–alanine 114. Residues cysteine 40 and cysteine 43 each act as nucleophile in the active site. Cysteine 40 and cysteine 43 are oxidised to a cystine.

Belongs to the thioredoxin family. Plant H-type subfamily.

The protein resides in the cytoplasm. Its function is as follows. Participates in various redox reactions through the reversible oxidation of the active center dithiol to a disulfide. The H form is known to activate a number of cytosolic enzymes. This Ricinus communis (Castor bean) protein is Thioredoxin H-type.